Here is a 241-residue protein sequence, read N- to C-terminus: Enolase-phosphatase E1 (241 aa).

Mg(2+) is bound by residues Asp-9 and Glu-11. Substrate-binding positions include 133 to 134 and Lys-172; that span reads SS. Asp-198 is a Mg(2+) binding site.

This sequence belongs to the HAD-like hydrolase superfamily. MasA/MtnC family. Monomer. The cofactor is Mg(2+).

It is found in the cytoplasm. The protein localises to the nucleus. It catalyses the reaction 5-methylsulfanyl-2,3-dioxopentyl phosphate + H2O = 1,2-dihydroxy-5-(methylsulfanyl)pent-1-en-3-one + phosphate. It functions in the pathway amino-acid biosynthesis; L-methionine biosynthesis via salvage pathway; L-methionine from S-methyl-5-thio-alpha-D-ribose 1-phosphate: step 3/6. The protein operates within amino-acid biosynthesis; L-methionine biosynthesis via salvage pathway; L-methionine from S-methyl-5-thio-alpha-D-ribose 1-phosphate: step 4/6. Its function is as follows. Bifunctional enzyme that catalyzes the enolization of 2,3-diketo-5-methylthiopentyl-1-phosphate (DK-MTP-1-P) into the intermediate 2-hydroxy-3-keto-5-methylthiopentenyl-1-phosphate (HK-MTPenyl-1-P), which is then dephosphorylated to form the acireductone 1,2-dihydroxy-3-keto-5-methylthiopentene (DHK-MTPene). The sequence is that of Enolase-phosphatase E1 from Scheffersomyces stipitis (strain ATCC 58785 / CBS 6054 / NBRC 10063 / NRRL Y-11545) (Yeast).